The chain runs to 427 residues: L-rhamnose isomerase (427 aa).

Residues H264, D296, and D298 each coordinate Mn(2+).

This sequence belongs to the rhamnose isomerase family. The cofactor is Mn(2+).

It is found in the cytoplasm. The catalysed reaction is L-rhamnopyranose = L-rhamnulose. Its pathway is carbohydrate degradation; L-rhamnose degradation; glycerone phosphate from L-rhamnose: step 1/3. Functionally, catalyzes the interconversion of L-rhamnose and L-rhamnulose. This is L-rhamnose isomerase from Lactiplantibacillus plantarum (strain ATCC BAA-793 / NCIMB 8826 / WCFS1) (Lactobacillus plantarum).